The primary structure comprises 534 residues: MVQRWLYSTNAKDIAVLYFMLAIFSGMAGTAMSLIIRLELAAPGSQYLHGNSQLFNVLVVGHAVLMIFFLVMPALIGGFGNYLLPLMIGATDTAFPRINNIAFWVLPMGLVCLVTSTLVESGAGTGWTVYPPLSSIQAHSGPSVDLAIFALHLTSISSLLGAINFIVTTLNMRTNGMTMHKLPLFVWSIFITAFLLLLSLPVLSAGITMLLLDRNFNTSFFEVSGGGDPILYEHLFWFFGHPEVYILIIPGFGIISHVVSTYSKKPVFGEISMVYAMASIGLLGFLVWSHHMYIVGLDADTRAYFTSATMIIAIPTGIKIFSWLATIHGGSIRLATPMLYAIAFLFLFTMGGLTGVALANASLDVAFHDTYYVVGHFHYVLSMGAIFSLFAGYYYWSPQILGLNYNEKLAQIQFWLIFIGANVIFFPMHFLGINGMPRRIPDYPDAFAGWNYVASIGSFIATLSLFLFIYILYDQLVNGLNNKVNNKSVIYNKAPDFVESNTIFNLNTVKSSSIEFLLTSPPAVHSFNTPAVQS.

The Mitochondrial matrix segment spans residues 1 to 14 (MVQRWLYSTNAKDI). Residues 15–39 (AVLYFMLAIFSGMAGTAMSLIIRLE) traverse the membrane as a helical segment. Residues Glu39, Ala42, and Gly44 each coordinate Ca(2+). The Mitochondrial intermembrane segment spans residues 40–54 (LAAPGSQYLHGNSQL). The chain crosses the membrane as a helical span at residues 55-88 (FNVLVVGHAVLMIFFLVMPALIGGFGNYLLPLMI). Fe(II)-heme a is bound at residue His62. The Mitochondrial matrix portion of the chain corresponds to 89–97 (GATDTAFPR). The chain crosses the membrane as a helical span at residues 98-118 (INNIAFWVLPMGLVCLVTSTL). The Mitochondrial intermembrane segment spans residues 119–142 (VESGAGTGWTVYPPLSSIQAHSGP). The helical transmembrane segment at 143–171 (SVDLAIFALHLTSISSLLGAINFIVTTLN) threads the bilayer. At 172 to 183 (MRTNGMTMHKLP) the chain is on the mitochondrial matrix side. Residues 184–215 (LFVWSIFITAFLLLLSLPVLSAGITMLLLDRN) form a helical membrane-spanning segment. Topologically, residues 216–228 (FNTSFFEVSGGGD) are mitochondrial intermembrane. Residues 229–263 (PILYEHLFWFFGHPEVYILIIPGFGIISHVVSTYS) form a helical membrane-spanning segment. A Cu cation-binding site is contributed by His241. Residues 241–245 (HPEVY) constitute a cross-link (1'-histidyl-3'-tyrosine (His-Tyr)). Tyr245 serves as a coordination point for O2. Topologically, residues 264 to 269 (KKPVFG) are mitochondrial matrix. Residues 270 to 295 (EISMVYAMASIGLLGFLVWSHHMYIV) traverse the membrane as a helical segment. The Cu cation site is built by His290 and His291. The Mitochondrial intermembrane portion of the chain corresponds to 296–298 (GLD). Residues 299-327 (ADTRAYFTSATMIIAIPTGIKIFSWLATI) form a helical membrane-spanning segment. Residues 328–335 (HGGSIRLA) are Mitochondrial matrix-facing. The chain crosses the membrane as a helical span at residues 336–358 (TPMLYAIAFLFLFTMGGLTGVAL). Over 359 to 370 (ANASLDVAFHDT) the chain is Mitochondrial intermembrane. Positions 368 and 369 each coordinate Mg(2+). A helical membrane pass occupies residues 371–400 (YYVVGHFHYVLSMGAIFSLFAGYYYWSPQI). Heme a3 is bound at residue His376. Fe(II)-heme a is bound at residue His378. Over 401-406 (LGLNYN) the chain is Mitochondrial matrix. The helical transmembrane segment at 407-431 (EKLAQIQFWLIFIGANVIFFPMHFL) threads the bilayer. Topologically, residues 432-449 (GINGMPRRIPDYPDAFAG) are mitochondrial intermembrane. Pro441 is a binding site for Ca(2+). A helical transmembrane segment spans residues 450 to 474 (WNYVASIGSFIATLSLFLFIYILYD). Over 475–534 (QLVNGLNNKVNNKSVIYNKAPDFVESNTIFNLNTVKSSSIEFLLTSPPAVHSFNTPAVQS) the chain is Mitochondrial matrix.

Belongs to the heme-copper respiratory oxidase family. Component of the cytochrome c oxidase (complex IV, CIV), a multisubunit enzyme composed of 12 subunits. The complex is composed of a catalytic core of 3 subunits COX1, COX2 and COX3, encoded in the mitochondrial DNA, and 9 supernumerary subunits COX4, COX5A (or COX5B), COX6, COX7, COX8, COX9, COX12, COX13 and COX26, which are encoded in the nuclear genome. The complex exists as a monomer or a dimer and forms supercomplexes (SCs) in the inner mitochondrial membrane with a dimer of ubiquinol-cytochrome c oxidoreductase (cytochrome b-c1 complex, complex III, CIII), resulting in 2 different assemblies (supercomplexes III(2)IV and III(2)IV(2)). Requires heme as cofactor. The cofactor is Cu cation. The N-terminus is blocked.

It is found in the mitochondrion inner membrane. It catalyses the reaction 4 Fe(II)-[cytochrome c] + O2 + 8 H(+)(in) = 4 Fe(III)-[cytochrome c] + 2 H2O + 4 H(+)(out). It functions in the pathway energy metabolism; oxidative phosphorylation. Component of the cytochrome c oxidase, the last enzyme in the mitochondrial electron transport chain which drives oxidative phosphorylation. The respiratory chain contains 3 multisubunit complexes succinate dehydrogenase (complex II, CII), ubiquinol-cytochrome c oxidoreductase (cytochrome b-c1 complex, complex III, CIII) and cytochrome c oxidase (complex IV, CIV), that cooperate to transfer electrons derived from NADH and succinate to molecular oxygen, creating an electrochemical gradient over the inner membrane that drives transmembrane transport and the ATP synthase. Cytochrome c oxidase is the component of the respiratory chain that catalyzes the reduction of oxygen to water. Electrons originating from reduced cytochrome c in the intermembrane space (IMS) are transferred via the dinuclear copper A center (CU(A)) of COX2 and heme A of COX1 to the active site in COX1, a binuclear center (BNC) formed by heme A3 and copper B (CU(B)). The BNC reduces molecular oxygen to 2 water molecules using 4 electrons from cytochrome c in the IMS and 4 protons from the mitochondrial matrix. COX1 is a catalytic core subunit containing heme A and the active site BNC with heme A3 and the copper atom CU(B). This is Cytochrome c oxidase subunit 1 (COX1) from Saccharomyces cerevisiae (strain ATCC 204508 / S288c) (Baker's yeast).